We begin with the raw amino-acid sequence, 224 residues long: 7-cyano-7-deazaguanine synthase (224 aa).

12–22 (LSGGLDSSTVT) provides a ligand contact to ATP. Residues C193, C201, C204, and C207 each contribute to the Zn(2+) site.

It belongs to the QueC family. Requires Zn(2+) as cofactor.

It catalyses the reaction 7-carboxy-7-deazaguanine + NH4(+) + ATP = 7-cyano-7-deazaguanine + ADP + phosphate + H2O + H(+). It functions in the pathway purine metabolism; 7-cyano-7-deazaguanine biosynthesis. Functionally, catalyzes the ATP-dependent conversion of 7-carboxy-7-deazaguanine (CDG) to 7-cyano-7-deazaguanine (preQ(0)). The sequence is that of 7-cyano-7-deazaguanine synthase from Prochlorococcus marinus (strain AS9601).